A 1387-amino-acid chain; its full sequence is DNA-directed RNA polymerase subunit beta (1387 aa).

The protein belongs to the RNA polymerase beta chain family. The RNAP catalytic core consists of 2 alpha, 1 beta, 1 beta' and 1 omega subunit. When a sigma factor is associated with the core the holoenzyme is formed, which can initiate transcription.

The enzyme catalyses RNA(n) + a ribonucleoside 5'-triphosphate = RNA(n+1) + diphosphate. Its function is as follows. DNA-dependent RNA polymerase catalyzes the transcription of DNA into RNA using the four ribonucleoside triphosphates as substrates. The chain is DNA-directed RNA polymerase subunit beta from Xanthomonas campestris pv. campestris (strain 8004).